Here is a 260-residue protein sequence, read N- to C-terminus: (R)-2-hydroxyglutaryl-CoA dehydratase activating ATPase (260 aa).

12 to 16 is an ATP binding site; that stretch reads STASK. The [4Fe-4S] cluster site is built by Cys127 and Cys166. Gln220 and Gln243 together coordinate ATP.

This sequence belongs to the HgdC family. Homodimer. [4Fe-4S] cluster serves as cofactor. Mg(2+) is required as a cofactor.

The enzyme catalyses ATP + H2O = ADP + phosphate + H(+). Its pathway is amino-acid degradation; L-glutamate degradation via hydroxyglutarate pathway; crotonoyl-CoA from L-glutamate: step 4/5. Its activity is regulated as follows. Inactivated by exposure to air within less than 15 minutes. Its function is as follows. Involved in the fermentation of L-glutamate via the hydroxyglutarate pathway. HgdC (CompA) has a very low ATPase activity, whose the role is to activate dehydratase HgdA-HgdB complex and then maintain an appropriate redox state via an ATP-dependent electron transfer. The dehydratase requires only catalytic amounts of ATP and substoichiometric amounts of HgdC (CompA) to be functional. The protein is (R)-2-hydroxyglutaryl-CoA dehydratase activating ATPase of Acidaminococcus fermentans (strain ATCC 25085 / DSM 20731 / CCUG 9996 / CIP 106432 / VR4).